The sequence spans 363 residues: NAD(P)H-quinone oxidoreductase subunit 1, chloroplastic (363 aa).

8 helical membrane passes run 26-46, 96-116, 127-147, 175-195, 203-223, 253-273, 303-323, and 343-363; these read FVWICVPIVVLILGITLGVLV, WLFALGPAIVVIPVLLSFLVI, ISIGMFFWIAVSSVAPVGLLV, LALCVLSVVLMSNSLSTIEIV, ILGWNIWRQPVGFIAFVISAL, FGLFYVASYLNLFASSLFVTI, GLIAFAITLSKAYLFLFASIL, and FLLPVALGNLLLTASFELALL.

This sequence belongs to the complex I subunit 1 family. As to quaternary structure, NDH is composed of at least 16 different subunits, 5 of which are encoded in the nucleus.

The protein resides in the plastid. It is found in the chloroplast thylakoid membrane. It carries out the reaction a plastoquinone + NADH + (n+1) H(+)(in) = a plastoquinol + NAD(+) + n H(+)(out). The catalysed reaction is a plastoquinone + NADPH + (n+1) H(+)(in) = a plastoquinol + NADP(+) + n H(+)(out). In terms of biological role, NDH shuttles electrons from NAD(P)H:plastoquinone, via FMN and iron-sulfur (Fe-S) centers, to quinones in the photosynthetic chain and possibly in a chloroplast respiratory chain. The immediate electron acceptor for the enzyme in this species is believed to be plastoquinone. Couples the redox reaction to proton translocation, and thus conserves the redox energy in a proton gradient. In Zygnema circumcarinatum (Green alga), this protein is NAD(P)H-quinone oxidoreductase subunit 1, chloroplastic.